Reading from the N-terminus, the 91-residue chain is Cell division protein ZapA (91 aa).

Positions 58–91 (LTAVNIASEYLKLKEEYNRLREQLKKEKDGERDD) form a coiled coil.

Belongs to the ZapA family. Type 2 subfamily. As to quaternary structure, homodimer. Interacts with FtsZ.

The protein resides in the cytoplasm. Its function is as follows. Activator of cell division through the inhibition of FtsZ GTPase activity, therefore promoting FtsZ assembly into bundles of protofilaments necessary for the formation of the division Z ring. It is recruited early at mid-cell but it is not essential for cell division. This Geobacillus kaustophilus (strain HTA426) protein is Cell division protein ZapA.